Reading from the N-terminus, the 207-residue chain is Ribosomal RNA large subunit methyltransferase E (207 aa).

The S-adenosyl-L-methionine site is built by Gly-56, Trp-58, Asp-76, Asp-94, and Asp-116. Lys-156 (proton acceptor) is an active-site residue.

The protein belongs to the class I-like SAM-binding methyltransferase superfamily. RNA methyltransferase RlmE family.

Its subcellular location is the cytoplasm. It carries out the reaction uridine(2552) in 23S rRNA + S-adenosyl-L-methionine = 2'-O-methyluridine(2552) in 23S rRNA + S-adenosyl-L-homocysteine + H(+). In terms of biological role, specifically methylates the uridine in position 2552 of 23S rRNA at the 2'-O position of the ribose in the fully assembled 50S ribosomal subunit. In Desulfatibacillum aliphaticivorans, this protein is Ribosomal RNA large subunit methyltransferase E.